The sequence spans 116 residues: Protein MGF 110-2L (116 aa).

Positions 1–19 (MRFFSYLGLLLAGLASLAS) are cleaved as a signal peptide.

It belongs to the asfivirus MGF 110 family.

Its function is as follows. Plays a role in virus cell tropism, and may be required for efficient virus replication in macrophages. The polypeptide is Protein MGF 110-2L (Ornithodoros (relapsing fever ticks)).